A 206-amino-acid polypeptide reads, in one-letter code: N-(5'-phosphoribosyl)anthranilate isomerase (206 aa).

The protein belongs to the TrpF family.

It catalyses the reaction N-(5-phospho-beta-D-ribosyl)anthranilate = 1-(2-carboxyphenylamino)-1-deoxy-D-ribulose 5-phosphate. It participates in amino-acid biosynthesis; L-tryptophan biosynthesis; L-tryptophan from chorismate: step 3/5. The sequence is that of N-(5'-phosphoribosyl)anthranilate isomerase from Pseudomonas putida (strain ATCC 700007 / DSM 6899 / JCM 31910 / BCRC 17059 / LMG 24140 / F1).